Consider the following 122-residue polypeptide: Basic phospholipase A2 LmTX-I (122 aa).

6 cysteine pairs are disulfide-bonded: Cys26/Cys115, Cys28/Cys44, Cys43/Cys95, Cys49/Cys122, Cys50/Cys88, and Cys75/Cys86. Ca(2+) contacts are provided by Tyr27, Gly29, and Gly31. Residue His47 is part of the active site. A Ca(2+)-binding site is contributed by Asp48. Asp89 is a catalytic residue.

As to quaternary structure, monomer. Ca(2+) serves as cofactor. As to expression, expressed by the venom gland.

The protein resides in the secreted. It catalyses the reaction a 1,2-diacyl-sn-glycero-3-phosphocholine + H2O = a 1-acyl-sn-glycero-3-phosphocholine + a fatty acid + H(+). Its activity is regulated as follows. Inhibited by Mn(2+), Mg(2+), Zn(2+) and Cu(2+). Snake venom phospholipase A2 (PLA2) that displays neurotoxic and myotoxic activities. Induces inflammatory edema by mechanisms involving mast cell activation and arachidonic acid metabolites. Increases plasma creatine kinase activity. PLA2 catalyzes the calcium-dependent hydrolysis of the 2-acyl groups in 3-sn-phosphoglycerides. This is Basic phospholipase A2 LmTX-I from Lachesis muta muta (Bushmaster).